Here is a 392-residue protein sequence, read N- to C-terminus: Caveolae-associated protein 1 (392 aa).

N-acetylmethionine is present on M1. Basic and acidic residues predominate over residues 1 to 10 (MEDVTLHIVE). A disordered region spans residues 1–45 (MEDVTLHIVERPYSGYPDASSEGPEPTPGEARATEEPSGTGSDEL). Residues 1-100 (MEDVTLHIVE…IQGELSKLGK (100 aa)) form a required for homotrimerization and for interaction with CAVIN2 and CAVIN3 region. Phosphoserine is present on residues S21 and S38. A Phosphothreonine modification is found at T40. 2 positions are modified to phosphoserine: S42 and S48. The segment at 54–64 (VLVLSLLDKII) is nuclear export signal. Residues 55-77 (LVLSLLDKIIGAVDQIQLTQAQL) form a leucine-zipper 1 region. K118 is covalently cross-linked (Glycyl lysine isopeptide (Lys-Gly) (interchain with G-Cter in SUMO2)). S120 is subject to Phosphoserine. K124 participates in a covalent cross-link: Glycyl lysine isopeptide (Lys-Gly) (interchain with G-Cter in SUMO2). The tract at residues 138-154 (KKLEVNEAELLRRRNFK) is nuclear localization signal. At Y158 the chain carries Phosphotyrosine. Residue K163 forms a Glycyl lysine isopeptide (Lys-Gly) (interchain with G-Cter in SUMO1); alternate linkage. A Glycyl lysine isopeptide (Lys-Gly) (interchain with G-Cter in SUMO2); alternate cross-link involves residue K163. K167 participates in a covalent cross-link: Glycyl lysine isopeptide (Lys-Gly) (interchain with G-Cter in SUMO2). Positions 168–188 (LSVSKSLKESEALPEKEGDEL) are leucine-zipper 2. Residues S169 and S171 each carry the phosphoserine modification. Residue K172 forms a Glycyl lysine isopeptide (Lys-Gly) (interchain with G-Cter in SUMO2) linkage. Residues S173 and S177 each carry the phosphoserine modification. A compositionally biased stretch (basic and acidic residues) spans 173-183 (SLKESEALPEK). The disordered stretch occupies residues 173–198 (SLKESEALPEKEGDELGEGERPEEDA). Acidic residues predominate over residues 184–198 (EGDELGEGERPEEDA). A coiled-coil region spans residues 201 to 284 (IELSSDEAVE…RMNKLGTRLV (84 aa)). Residues S204 and S205 each carry the phosphoserine modification. The tract at residues 235–251 (KKAFSKEKMEKTKVRTR) is nuclear localization signal. The segment at 259–299 (LKTKENLEKTRHTLEKRMNKLGTRLVPVERREKLKTSRDKL) is leucine-zipper 3. S302 is subject to Phosphoserine. T304 is subject to Phosphothreonine. Y310 carries the post-translational modification Phosphotyrosine. K328 participates in a covalent cross-link: Glycyl lysine isopeptide (Lys-Gly) (interchain with G-Cter in SUMO2). The tract at residues 347–367 (GPDDDEVGAERGAETDLLRGS) is disordered. The span at 354–363 (GAERGAETDL) shows a compositional bias: basic and acidic residues. S367, S368, S381, S389, and S391 each carry phosphoserine.

Belongs to the CAVIN family. As to quaternary structure, component of the CAVIN complex composed of CAVIN1, CAVIN2, CAVIN3 and CAVIN4. Interacts with RNA polymerase I subunit POLR1A/RPA1 and TTF1. Binds the 3' end of pre-rRNA. Interacts with transcription factor ZNF148. Interacts with LIPE in the adipocyte cytoplasm. Interacts with CAV1, CAV3, CAVIN2, CAVIN3 and CAVIN4. In terms of processing, phosphorylated. Present in active and inactive forms. Changes in phosphorylation pattern may alter activity. Phosphorylation at Tyr-158 is essential for its function in the regulation of ribosomal transcriptional activity. Post-translationally, monoubiquitinated. As to expression, expressed in the adipocyte (at protein level). Expressed in all striated and smooth muscles tested including diaphragm, esophageal striated muscle, fibroblast, endocardial endothelium, epicardial mesothelium, intestinal smooth muscle, masseter, soleus muscle, vascular smooth muscle and white gastrocnemius muscle (at protein level). Expressed in the endothelium and perineural sheath (at protein level). Not expressed in hepatocytes.

It is found in the membrane. It localises to the caveola. The protein localises to the cell membrane. The protein resides in the microsome. Its subcellular location is the endoplasmic reticulum. It is found in the cytoplasm. It localises to the cytosol. The protein localises to the mitochondrion. The protein resides in the nucleus. Its function is as follows. Plays an important role in caveolae formation and organization. Essential for the formation of caveolae in all tissues. Core component of the CAVIN complex which is essential for recruitment of the complex to the caveolae in presence of calveolin-1 (CAV1). Essential for normal oligomerization of CAV1. Promotes ribosomal transcriptional activity in response to metabolic challenges in the adipocytes and plays an important role in the formation of the ribosomal transcriptional loop. Dissociates transcription complexes paused by DNA-bound TTF1, thereby releasing both RNA polymerase I and pre-RNA from the template. The caveolae biogenesis pathway is required for the secretion of proteins such as GASK1A. The chain is Caveolae-associated protein 1 from Rattus norvegicus (Rat).